Reading from the N-terminus, the 665-residue chain is Prelamin-A/C (665 aa).

An N-acetylmethionine modification is found at M1. The tract at residues 1–27 (METPSQRRPTRSGAQASSTPLSPTRIT) is disordered. The head stretch occupies residues 1 to 33 (METPSQRRPTRSGAQASSTPLSPTRITRLQEKE). The interaction with MLIP stretch occupies residues 1–130 (METPSQRRPT…TKKEGDLLAA (130 aa)). T3 carries the post-translational modification Phosphothreonine. S5 carries the post-translational modification Phosphoserine. A Phosphothreonine modification is found at T10. 2 positions are modified to phosphoserine: S12 and S18. At T19 the chain carries Phosphothreonine. S22 is subject to Phosphoserine. The IF rod domain maps to 31-387 (EKEDLQELND…KLLEGEEERL (357 aa)). An N6-acetyllysine; alternate modification is found at K32. K32 bears the N6-succinyllysine; alternate mark. Residue K32 forms a Glycyl lysine isopeptide (Lys-Gly) (interchain with G-Cter in SUMO2); alternate linkage. Residues 34–70 (DLQELNDRLAVYIDRVRSLETENAGLRLRITESEEVV) are coil 1A. Phosphoserine occurs at positions 51, 66, and 71. The tract at residues 71-80 (SREVSGIKAA) is linker 1. K78 and K97 each carry N6-acetyllysine. Residues 81–218 (YEAELGDARK…NIYSEELRET (138 aa)) form a coil 1B region. Residue K97 forms a Glycyl lysine isopeptide (Lys-Gly) (interchain with G-Cter in SUMO2) linkage. The residue at position 107 (S107) is a Phosphoserine. 6 positions are modified to N6-acetyllysine: K108, K114, K123, K135, K144, and K155. K171 is modified (N6-acetyllysine; alternate). K171 carries the post-translational modification N6-succinyllysine; alternate. Residue K171 forms a Glycyl lysine isopeptide (Lys-Gly) (interchain with G-Cter in SUMO2); alternate linkage. 3 positions are modified to N6-acetyllysine: K180, K201, and K208. Residue K201 forms a Glycyl lysine isopeptide (Lys-Gly) (interchain with G-Cter in SUMO2); alternate linkage. Residue K201 forms a Glycyl lysine isopeptide (Lys-Gly) (interchain with G-Cter in SUMO); alternate linkage. K208 participates in a covalent cross-link: Glycyl lysine isopeptide (Lys-Gly) (interchain with G-Cter in SUMO2). S212 bears the Phosphoserine mark. Glycyl lysine isopeptide (Lys-Gly) (interchain with G-Cter in SUMO2) cross-links involve residues K219 and K233. Positions 219 to 242 (KRRHETRLVEIDNGKQREFESRLA) are linker 2. Residues K233, K260, K265, and K270 each carry the N6-acetyllysine modification. Residues 243–383 (DALQELRAQH…HAYRKLLEGE (141 aa)) are coil 2. K260 is covalently cross-linked (Glycyl lysine isopeptide (Lys-Gly) (interchain with G-Cter in SUMO2); alternate). K270 is covalently cross-linked (Glycyl lysine isopeptide (Lys-Gly) (interchain with G-Cter in SUMO2); alternate). Phosphoserine occurs at positions 277, 282, 301, and 307. K311 is covalently cross-linked (Glycyl lysine isopeptide (Lys-Gly) (interchain with G-Cter in SUMO2); alternate). An N6-acetyllysine mark is found at K311, K316, and K341. Residues K366 and K378 each participate in a glycyl lysine isopeptide (Lys-Gly) (interchain with G-Cter in SUMO2) cross-link. The segment at 384 to 442 (EERLRLSPSPTSQRSRGRASSHSSQSQGGGSVTKKRKLESSESRSSFSQHARTSGRVAV) is disordered. The tract at residues 384–665 (EERLRLSPSP…TQSSQNCSIM (282 aa)) is tail. A phosphoserine mark is found at S390, S392, S395, S398, S403, S404, S406, S407, S409, and S414. The segment covering 395–409 (SQRSRGRASSHSSQS) has biased composition (low complexity). T416 is subject to Phosphothreonine. The residue at position 417 (K417) is an N6-acetyllysine. Residues K417 and K420 each participate in a glycyl lysine isopeptide (Lys-Gly) (interchain with G-Cter in SUMO2) cross-link. The Nuclear localization signal motif lies at 417 to 422 (KKRKLE). 4 positions are modified to phosphoserine: S423, S426, S429, and S431. One can recognise an LTD domain in the interval 428–545 (SSFSQHARTS…EEVAMRKLVR (118 aa)). Residue K450 forms a Glycyl lysine isopeptide (Lys-Gly) (interchain with G-Cter in SUMO2); alternate linkage. Residues K450 and K457 each carry the N6-acetyllysine modification. 2 positions are modified to phosphoserine: S458 and S463. Residues K470 and K486 each participate in a glycyl lysine isopeptide (Lys-Gly) (interchain with G-Cter in SUMO2) cross-link. An N6-acetyllysine modification is found at K486. T496 is subject to Phosphothreonine. At S500 the chain carries Phosphoserine. A phosphothreonine mark is found at T505 and T510. S546 is subject to Phosphoserine. T548 is modified (phosphothreonine). The segment covering 552–561 (DNDDEEEDGD) has biased composition (acidic residues). Residues 552-577 (DNDDEEEDGDELLHHHRGSHCSSSGD) are disordered. Phosphoserine occurs at positions 570 and 573. Residue K599 forms a Glycyl lysine isopeptide (Lys-Gly) (interchain with G-Cter in SUMO2); alternate linkage. K599 is covalently cross-linked (Glycyl lysine isopeptide (Lys-Gly) (interchain with G-Cter in SUMO1); alternate). A phosphoserine mark is found at S613, S614, S617, and S620. O-linked (GlcNAc) serine glycosylation is found at S626 and S629. A phosphoserine mark is found at S629, S633, S637, and S653. A propeptide spans 648-662 (LLGNSSPRTQSSQNC) (removed in Lamin-A/C form). The residue at position 662 (C662) is a Cysteine methyl ester. Residue C662 is the site of S-farnesyl cysteine attachment. The propeptide at 663–665 (SIM) is removed in Prelamin-A/C form and in Lamin-A/C form.

This sequence belongs to the intermediate filament family. In terms of assembly, homodimer of lamin A and lamin C. Lamin dimers then assemble into dimeric head-to-tail polymers. Ultimately, two head-to-tail polymers assemble laterally into a protofilament with a uniformly shaped rod of 3.5 nm in diameter. Interacts with lamin-associated polypeptides IA, IB and TMPO-alpha, RB1 and with emerin. Interacts with SREBF1, SREBF2, SUN2 and TMEM43. Interacts with TMEM201. Proteolytically processed isoform A interacts with NARF. Interacts with SUN1. Interacts with MLIP. Interacts with DMPK; may regulate nuclear envelope stability. Interacts with SUV39H1; the interaction increases stability of SUV39H1. Interacts with SYNE2. Interacts with ITSN1 isoform 2. Interacts with IFFO1; enables the formation of an interior nucleoskeleton that is recruited to DNA double-strand breaks. As to quaternary structure, interacts with EMD. Interacts (via C-terminus) with LEMD2 (via N-terminus) (in vitro). Post-translationally, proteolytic cleavage of the C-terminal of 18 residues of prelamin-A/C results in the production of lamin-A/C. The prelamin-A/C maturation pathway includes farnesylation of CAAX motif by protein farnesyltransferase (FNTA and FNTB), removal of the last three amino acids (-AAX) by RCE1/FACE2 and/or ZMPSTE24, methylation of the C-terminal cysteine by ICMT and endoproteolytic removal of the last 15 C-terminal amino acids by ZMPSTE24. Proteolytic cleavage requires prior farnesylation and methylation, and absence of these blocks cleavage. In terms of processing, farnesylation of prelamin-A/C facilitates nuclear envelope targeting. Phosphorylation plays a key role in lamin organization, subcellular localization and nuclear envelope disintegration. Phosphorylation by CDK1 at Ser-22 and Ser-392 at the onset of mitosis drives lamin disassembly and nuclear envelope breakdown. Phosphorylation at Ser-22 and Ser-392 during interphase promotes localization to the nucleoplasm and regulates lamina assembly. Phosphorylation at Ser-22, Ser-392 and Ser-629 during interphase causes redistribution between the nucleus and the cytoplasm. Phosphorylation at Ser-22 by CDK1 regulates matrix stiffness. Phosphorylation status of Ser-22 determines its localization between double-strand break (DSB) sites and the nuclear matrix. Phosphorylated by ATR at Ser-282 in response to DNA damage, leading to lamin disassembly and nuclear envelope rupture. Phosphorylation also regulates stability in micronuclei arising from genome instability: phosphorylation at Ser-395 by ATR in response to genome instability and double-stranded DNA breaks primes LMNA for subsequent phosphorylation at Ser-392 by CDK1 and micronuclei envelope rupture. The rupture of micronuclear envelope triggers the cGAS-STING pathway thereby activating the type I interferon response and innate immunity. Post-translationally, acetylation by KAT8 is required for nuclear architecture. In terms of processing, sumoylation is necessary for the localization to the nuclear envelope.

The protein localises to the nucleus lamina. Its subcellular location is the nucleus envelope. It is found in the nucleus. The protein resides in the nucleoplasm. It localises to the nucleus matrix. In terms of biological role, lamins are intermediate filament proteins that assemble into a filamentous meshwork, and which constitute the major components of the nuclear lamina, a fibrous layer on the nucleoplasmic side of the inner nuclear membrane. Lamins provide a framework for the nuclear envelope, bridging the nuclear envelope and chromatin, thereby playing an important role in nuclear assembly, chromatin organization, nuclear membrane and telomere dynamics. Lamin A and C also regulate matrix stiffness by conferring nuclear mechanical properties. The structural integrity of the lamina is strictly controlled by the cell cycle, as seen by the disintegration and formation of the nuclear envelope in prophase and telophase, respectively. Lamin A and C are present in equal amounts in the lamina of mammals. Also invoved in DNA repair: recruited by DNA repair proteins XRCC4 and IFFO1 to the DNA double-strand breaks (DSBs) to prevent chromosome translocation by immobilizing broken DNA ends. Required for normal development of peripheral nervous system and skeletal muscle and for muscle satellite cell proliferation. Required for osteoblastogenesis and bone formation. Also prevents fat infiltration of muscle and bone marrow, helping to maintain the volume and strength of skeletal muscle and bone. Required for cardiac homeostasis. Prelamin-A/C can accelerate smooth muscle cell senescence. It acts to disrupt mitosis and induce DNA damage in vascular smooth muscle cells (VSMCs), leading to mitotic failure, genomic instability, and premature senescence. In Rattus norvegicus (Rat), this protein is Prelamin-A/C (Lmna).